A 358-amino-acid polypeptide reads, in one-letter code: Uroporphyrinogen decarboxylase (358 aa).

Substrate is bound by residues 27–31 (RQAGR), aspartate 77, tyrosine 154, serine 209, and histidine 327.

It belongs to the uroporphyrinogen decarboxylase family. In terms of assembly, homodimer.

The protein localises to the cytoplasm. It catalyses the reaction uroporphyrinogen III + 4 H(+) = coproporphyrinogen III + 4 CO2. It participates in porphyrin-containing compound metabolism; protoporphyrin-IX biosynthesis; coproporphyrinogen-III from 5-aminolevulinate: step 4/4. Its function is as follows. Catalyzes the decarboxylation of four acetate groups of uroporphyrinogen-III to yield coproporphyrinogen-III. This Azoarcus sp. (strain BH72) protein is Uroporphyrinogen decarboxylase.